The following is a 564-amino-acid chain: Chaperonin GroEL 2 (564 aa).

Residues 29-32 (TIGP), 86-90 (DGTTT), G413, and D493 each bind ATP. The interval 521-541 (DKPEPPAPAGDGGGDPMGGMG) is disordered. The span at 530-541 (GDGGGDPMGGMG) shows a compositional bias: gly residues.

Belongs to the chaperonin (HSP60) family. In terms of assembly, forms a cylinder of 14 subunits composed of two heptameric rings stacked back-to-back. Interacts with the co-chaperonin GroES.

It is found in the cytoplasm. It carries out the reaction ATP + H2O + a folded polypeptide = ADP + phosphate + an unfolded polypeptide.. Together with its co-chaperonin GroES, plays an essential role in assisting protein folding. The GroEL-GroES system forms a nano-cage that allows encapsulation of the non-native substrate proteins and provides a physical environment optimized to promote and accelerate protein folding. This is Chaperonin GroEL 2 from Prochlorococcus marinus (strain MIT 9303).